The primary structure comprises 497 residues: Glycerol kinase 2 (497 aa).

Thr13 serves as a coordination point for ADP. 3 residues coordinate ATP: Thr13, Thr14, and Ser15. Thr13 is a binding site for sn-glycerol 3-phosphate. An ADP-binding site is contributed by Arg17. 4 residues coordinate sn-glycerol 3-phosphate: Arg83, Glu84, Tyr134, and Asp241. 5 residues coordinate glycerol: Arg83, Glu84, Tyr134, Asp241, and Gln242. Residues Thr263 and Gly305 each coordinate ADP. Residues Thr263, Gly305, Gln309, and Gly406 each contribute to the ATP site. ADP is bound by residues Gly406 and Asn410.

The protein belongs to the FGGY kinase family.

It carries out the reaction glycerol + ATP = sn-glycerol 3-phosphate + ADP + H(+). It functions in the pathway polyol metabolism; glycerol degradation via glycerol kinase pathway; sn-glycerol 3-phosphate from glycerol: step 1/1. Its function is as follows. Key enzyme in the regulation of glycerol uptake and metabolism. Catalyzes the phosphorylation of glycerol to yield sn-glycerol 3-phosphate. The chain is Glycerol kinase 2 from Sulfolobus acidocaldarius (strain ATCC 33909 / DSM 639 / JCM 8929 / NBRC 15157 / NCIMB 11770).